Consider the following 110-residue polypeptide: Thiosulfate sulfurtransferase GlpE (110 aa).

A Rhodanese domain is found at H17 to E105. Catalysis depends on C65, which acts as the Cysteine persulfide intermediate.

This sequence belongs to the GlpE family.

It is found in the cytoplasm. It carries out the reaction thiosulfate + hydrogen cyanide = thiocyanate + sulfite + 2 H(+). The catalysed reaction is thiosulfate + [thioredoxin]-dithiol = [thioredoxin]-disulfide + hydrogen sulfide + sulfite + 2 H(+). Transferase that catalyzes the transfer of sulfur from thiosulfate to thiophilic acceptors such as cyanide or dithiols. May function in a CysM-independent thiosulfate assimilation pathway by catalyzing the conversion of thiosulfate to sulfite, which can then be used for L-cysteine biosynthesis. The chain is Thiosulfate sulfurtransferase GlpE from Enterobacter sp. (strain 638).